A 688-amino-acid polypeptide reads, in one-letter code: MARKFPLERTRNIGIMAHIDAGKTTTTERILFYTGQTHKIGETHEGASQMDWMEQEKERGITITSAATTASWKDHRINIIDTPGHVDFTVEVERSLRVLDGSVAVFCAKGGVEPQSENVWRQAETYGVPRIAFVNKMDILGADFYNVVSMMKSRLNSNAVPMQLPIGKEDSFIGIIDLLKMDAVIYKDDLGVEMEETDIPEDMKELAAEWREKLVESVAETDEELMMKYLEGEELTIDELKVAIRKATIACEMNPVFCGTAYRNKGVQLVIDAVLDYLPAPTDIPAIKGILADGEEAERHSSDEEPFSALAFKIMTDPFVGKLAFFRVYSGTLESGSYVLNATKNKRERIGRILQMHANTREEITKVYAGDIAAAVGLKDTTTGDTLCDPANPIILESMEFPEPVISVAIEPSSKAAQEKMGIALQKLAEEDPTFTVKTDQETGQTIISGMGELHLEIIVDRLLREFKVEAKVGAPQVAYRETITQPVDVEYKYSKQSGGRGQYGHVKIRVAPQEPGEGYKFTNKTVGGSVPKEYVGPVDMGIQGAMQSGIVAGYPVVDVAVELYDGSYHEVDSSEMAFKMAGSMAFKDAMKKGNAVLLEPYFKVEVVTPEDYMGDVMGDLNSRRGLIQGMEARSGAQVINAFVPLSEMFGYSTDLRSSTQGRATYTMIFDHYEQVPASVAKKIAEGK.

Residues 8 to 282 (ERTRNIGIMA…AVLDYLPAPT (275 aa)) enclose the tr-type G domain. Residues 17–24 (AHIDAGKT), 81–85 (DTPGH), and 135–138 (NKMD) contribute to the GTP site.

The protein belongs to the TRAFAC class translation factor GTPase superfamily. Classic translation factor GTPase family. EF-G/EF-2 subfamily.

It is found in the cytoplasm. Catalyzes the GTP-dependent ribosomal translocation step during translation elongation. During this step, the ribosome changes from the pre-translocational (PRE) to the post-translocational (POST) state as the newly formed A-site-bound peptidyl-tRNA and P-site-bound deacylated tRNA move to the P and E sites, respectively. Catalyzes the coordinated movement of the two tRNA molecules, the mRNA and conformational changes in the ribosome. This is Elongation factor G from Clostridioides difficile (strain 630) (Peptoclostridium difficile).